Here is a 185-residue protein sequence, read N- to C-terminus: Ribosome-recycling factor (185 aa).

It belongs to the RRF family.

It localises to the cytoplasm. Functionally, responsible for the release of ribosomes from messenger RNA at the termination of protein biosynthesis. May increase the efficiency of translation by recycling ribosomes from one round of translation to another. This chain is Ribosome-recycling factor, found in Clostridium acetobutylicum (strain ATCC 824 / DSM 792 / JCM 1419 / IAM 19013 / LMG 5710 / NBRC 13948 / NRRL B-527 / VKM B-1787 / 2291 / W).